A 91-amino-acid chain; its full sequence is MAKTNSINNAAYDQLNKDADRILQLIKVQMDNLTLPQCPLYEEVLDTQMFGLQKEVDFAANLGLIDIEMGKEIMLRLEKELSKLHEAFTNV.

Belongs to the UPF0358 family.

The chain is UPF0358 protein Sca_0738 from Staphylococcus carnosus (strain TM300).